Reading from the N-terminus, the 146-residue chain is Hemoglobin subunit beta (146 aa).

One can recognise a Globin domain in the interval 2 to 146; it reads QWSDSERTII…VVMFLGKQYH (145 aa). H63 and H92 together coordinate heme b.

The protein belongs to the globin family. In terms of assembly, heterotetramer of two alpha chains and two beta chains. Red blood cells.

In terms of biological role, involved in oxygen transport from the lung to the various peripheral tissues. This Artedidraco orianae (Barbeled plunderfish) protein is Hemoglobin subunit beta (hbb).